A 235-amino-acid polypeptide reads, in one-letter code: Vacuolar protein sorting-associated protein 60.1 (235 aa).

Residues 1-29 (MRRVFGAKKNTEPPPSIQDASDRINKRGD) are disordered. Positions 20-29 (ASDRINKRGD) are enriched in basic and acidic residues. A coiled-coil region spans residues 99-148 (LKDAQQTMTALKSANKELKGMMKTVKIQDIDNLQDEMMDLMDVSSEIQES). Residues 175–235 (MGNETEADGM…PAVPRASLRG (61 aa)) are disordered.

Belongs to the SNF7 family. In terms of assembly, interacts with SKD1/VPS4 and LIP5. Interacts with VPS2.2.

The protein resides in the endosome. It localises to the multivesicular body membrane. Functionally, probable peripherally associated component of the endosomal sorting required for transport complex III (ESCRT-III) which is involved in multivesicular bodies (MVBs) formation and sorting of endosomal cargo proteins into MVBs. The chain is Vacuolar protein sorting-associated protein 60.1 from Arabidopsis thaliana (Mouse-ear cress).